The sequence spans 227 residues: Cytidylate kinase (227 aa).

12-20 (GPSGAGKGT) lines the ATP pocket.

It belongs to the cytidylate kinase family. Type 1 subfamily.

The protein resides in the cytoplasm. The enzyme catalyses CMP + ATP = CDP + ADP. It carries out the reaction dCMP + ATP = dCDP + ADP. The protein is Cytidylate kinase of Sodalis glossinidius (strain morsitans).